The sequence spans 123 residues: Putative outer membrane protein CPn_0818/CP_1053/CPj0818/CpB0847 (123 aa).

An N-terminal signal peptide occupies residues 1 to 30; it reads MKRQKRKQSITLIEMMVVITLIGIIGGALA.

The protein resides in the cell outer membrane. The protein is Putative outer membrane protein CPn_0818/CP_1053/CPj0818/CpB0847 of Chlamydia pneumoniae (Chlamydophila pneumoniae).